A 156-amino-acid polypeptide reads, in one-letter code: Flagellar assembly factor FliW (156 aa).

Belongs to the FliW family. In terms of assembly, interacts with translational regulator CsrA and flagellin(s).

The protein localises to the cytoplasm. Functionally, acts as an anti-CsrA protein, binds CsrA and prevents it from repressing translation of its target genes, one of which is flagellin. Binds to flagellin and participates in the assembly of the flagellum. The chain is Flagellar assembly factor FliW from Syntrophomonas wolfei subsp. wolfei (strain DSM 2245B / Goettingen).